The following is a 229-amino-acid chain: Cytochrome c oxidase subunit 2 (229 aa).

Over 1 to 26 the chain is Mitochondrial intermembrane; it reads MSTWANLGLQDSASPLMEQLIFFHDH. Residues 27 to 48 traverse the membrane as a helical segment; that stretch reads ALLILVMITVLVGYLMFMLFFN. Topologically, residues 49–62 are mitochondrial matrix; that stretch reads SYVNRFLLHGQLIE. A helical membrane pass occupies residues 63 to 82; that stretch reads MIWTILPAIILLFIAMPSLR. The Mitochondrial intermembrane portion of the chain corresponds to 83–229; it reads LLYLLDEINE…IKWISSTVNS (147 aa). The Cu cation site is built by histidine 161, cysteine 196, glutamate 198, cysteine 200, histidine 204, and methionine 207. Glutamate 198 is a Mg(2+) binding site.

It belongs to the cytochrome c oxidase subunit 2 family. Component of the cytochrome c oxidase (complex IV, CIV), a multisubunit enzyme composed of a catalytic core of 3 subunits and several supernumerary subunits. The complex exists as a monomer or a dimer and forms supercomplexes (SCs) in the inner mitochondrial membrane with ubiquinol-cytochrome c oxidoreductase (cytochrome b-c1 complex, complex III, CIII). The cofactor is Cu cation.

Its subcellular location is the mitochondrion inner membrane. The catalysed reaction is 4 Fe(II)-[cytochrome c] + O2 + 8 H(+)(in) = 4 Fe(III)-[cytochrome c] + 2 H2O + 4 H(+)(out). Its function is as follows. Component of the cytochrome c oxidase, the last enzyme in the mitochondrial electron transport chain which drives oxidative phosphorylation. The respiratory chain contains 3 multisubunit complexes succinate dehydrogenase (complex II, CII), ubiquinol-cytochrome c oxidoreductase (cytochrome b-c1 complex, complex III, CIII) and cytochrome c oxidase (complex IV, CIV), that cooperate to transfer electrons derived from NADH and succinate to molecular oxygen, creating an electrochemical gradient over the inner membrane that drives transmembrane transport and the ATP synthase. Cytochrome c oxidase is the component of the respiratory chain that catalyzes the reduction of oxygen to water. Electrons originating from reduced cytochrome c in the intermembrane space (IMS) are transferred via the dinuclear copper A center (CU(A)) of subunit 2 and heme A of subunit 1 to the active site in subunit 1, a binuclear center (BNC) formed by heme A3 and copper B (CU(B)). The BNC reduces molecular oxygen to 2 water molecules using 4 electrons from cytochrome c in the IMS and 4 protons from the mitochondrial matrix. This is Cytochrome c oxidase subunit 2 (mt:CoII) from Drosophila lowei (Fruit fly).